Consider the following 976-residue polypeptide: LRR receptor-like serine/threonine-protein kinase ERECTA (976 aa).

The first 24 residues, 1–24, serve as a signal peptide directing secretion; the sequence is MALFRDIVLLGFLFCLSLVATVTS. Topologically, residues 25–580 are extracellular; sequence EEGATLLEIK…RRTVRVSISR (556 aa). N-linked (GlcNAc...) asparagine glycans are attached at residues asparagine 65 and asparagine 74. LRR repeat units lie at residues 69–92, 93–115, 117–140, 141–163, 165–187, 189–212, 213–235, 237–259, 260–282, 284–306, 308–330, 332–355, 356–379, 380–401, 404–425, 428–449, 452–473, 476–498, 500–522, and 523–545; these read NVVA…GDLK, SLLS…IGDC, SLQN…SKLK, QLEQ…LSQI, NLKI…IYWN, VLQY…CQLT, GLWY…IGNC, AFQV…IGFL, QVAT…IGLM, ALAV…LGNL, FTEK…LGNM, KLHY…GKLT, DLFD…SSCT, NLNS…AFQK, SMTY…ELSR, NLDT…SLGD, HLLK…DFGN, SIME…LNQL, NIIL…ANCL, and SLTV…NNFS. Asparagine 221 and asparagine 234 each carry an N-linked (GlcNAc...) asparagine glycan. 2 N-linked (GlcNAc...) asparagine glycosylation sites follow: asparagine 305 and asparagine 329. The N-linked (GlcNAc...) asparagine glycan is linked to asparagine 409. Asparagine 457 is a glycosylation site (N-linked (GlcNAc...) asparagine). N-linked (GlcNAc...) asparagine glycosylation is found at asparagine 510, asparagine 528, and asparagine 543. A helical membrane pass occupies residues 581–601; sequence AAILGIAIGGLVILLMVLIAA. The Cytoplasmic portion of the chain corresponds to 602–976; it reads CRPHNPPPFL…FGQVISQNSE (375 aa). Position 645 is a phosphothreonine (threonine 645). Residues 648-918 enclose the Protein kinase domain; it reads LSEKYIIGHG…QVTRVLGSFM (271 aa). ATP-binding positions include 654–662 and lysine 676; that span reads IGHGASSTV. 2 positions are modified to phosphotyrosine: tyrosine 721 and tyrosine 760. Aspartate 773 serves as the catalytic Proton acceptor. Tyrosine 815 is modified (phosphotyrosine). A Phosphothreonine modification is found at threonine 823.

The protein belongs to the protein kinase superfamily. Ser/Thr protein kinase family. Homodimer and heterodimer with ERL1 and TMM. Interacts with EPF1, EPF2, EPFL4, EPFL5 and EPFL6. Interacts with SERK1, SERK2, SERK3/BAK1 and SERK4 in a EPF2-induced manner. Interacts with EPFL9/STOMAGEN. Mostly expressed in shoot apical meristems (SAM), organ primordia, flowers, siliques and young rosette leaves, and, to a lower extent, in stems and cauline leaves. Expressed in growing inflorescence stems and pedicels. Detected in epidermis, phloem and xylem.

The protein resides in the cell membrane. It catalyses the reaction L-seryl-[protein] + ATP = O-phospho-L-seryl-[protein] + ADP + H(+). It carries out the reaction L-threonyl-[protein] + ATP = O-phospho-L-threonyl-[protein] + ADP + H(+). In terms of biological role, receptor kinase that, together with ERL1 and ERL2, regulates aerial architecture, including inflorescence (e.g. shoot apical meristem-originating organ shape, elongation of the internode and pedicels, and adaxial-abaxial polarity), and stomatal patterning (e.g. density and clustering), probably by tuning cell division and expansion. Redundantly involved with ERL1 in procambial development regulation. Forms a functional ligand-receptor pair with EPF2 (AC Q8LC53). Modulates plant transpiration efficiency by controlling stomatal density, leaf photosynthetic capacity, epidermal cell expansion, mesophyll cell proliferation and cell-cell contact. A phloem-specific expression of ER is sufficient for proper inflorescence architecture. Probable major trait regulating canalization (maintenance of phenotype despite varying environment) in many aspect of the plant physiology (e.g. plant morphology, light-dependent leaves number, branch number, flowering time, phytate and mineral concentrations) by transducing microenvironmental variation into phenotypic differentiation (ecological amplifier). May maintain development integrity in heat stress conditions. Regulates cell wall composition and structure. Confers resistance to the pathogenic bacteria Ralstonia solanacearum and to the necrotrophic fungi Plectosphaerella cucumerina and Pythium irregulare, and required for callose deposition upon infection. Resistance to P.cucumerina seems cell wall-mediated. Forms a constitutive complex with TMM involved in the recognition of the stomatal regulatory peptides EPF1, EPF2 and EPFL9/STOMAGEN. This chain is LRR receptor-like serine/threonine-protein kinase ERECTA, found in Arabidopsis thaliana (Mouse-ear cress).